The following is a 143-amino-acid chain: Large ribosomal subunit protein uL11 (143 aa).

The protein belongs to the universal ribosomal protein uL11 family. Part of the ribosomal stalk of the 50S ribosomal subunit. Interacts with L10 and the large rRNA to form the base of the stalk. L10 forms an elongated spine to which L12 dimers bind in a sequential fashion forming a multimeric L10(L12)X complex. In terms of processing, one or more lysine residues are methylated.

Its function is as follows. Forms part of the ribosomal stalk which helps the ribosome interact with GTP-bound translation factors. This chain is Large ribosomal subunit protein uL11, found in Paenarthrobacter aurescens (strain TC1).